The primary structure comprises 311 residues: Ornithine carbamoyltransferase (311 aa).

Residues S56–T59, Q83, R107, and H134–Q137 contribute to the carbamoyl phosphate site. L-ornithine contacts are provided by residues N166, D230, and S234–M235. Carbamoyl phosphate is bound by residues C270–L271 and K298.

It belongs to the aspartate/ornithine carbamoyltransferase superfamily. OTCase family.

It is found in the cytoplasm. It carries out the reaction carbamoyl phosphate + L-ornithine = L-citrulline + phosphate + H(+). It participates in amino-acid degradation; L-arginine degradation via ADI pathway; carbamoyl phosphate from L-arginine: step 2/2. In terms of biological role, reversibly catalyzes the transfer of the carbamoyl group from carbamoyl phosphate (CP) to the N(epsilon) atom of ornithine (ORN) to produce L-citrulline. In Ignicoccus hospitalis (strain KIN4/I / DSM 18386 / JCM 14125), this protein is Ornithine carbamoyltransferase.